Reading from the N-terminus, the 377-residue chain is D-alanine--D-alanine ligase (377 aa).

Positions 140 to 349 (KELLTVNGIR…NAKLVDMLID (210 aa)) constitute an ATP-grasp domain. 170–225 (VAELGNIVFVKAANQGSSVGISRVTNAEEYTEALSDSFQYDYKVLIEEAVNGAREL) contacts ATP. Asp303, Glu316, and Asn318 together coordinate Mg(2+).

The protein belongs to the D-alanine--D-alanine ligase family. Requires Mg(2+) as cofactor. The cofactor is Mn(2+).

Its subcellular location is the cytoplasm. The catalysed reaction is 2 D-alanine + ATP = D-alanyl-D-alanine + ADP + phosphate + H(+). It participates in cell wall biogenesis; peptidoglycan biosynthesis. Functionally, cell wall formation. In Leuconostoc mesenteroides subsp. mesenteroides (strain ATCC 8293 / DSM 20343 / BCRC 11652 / CCM 1803 / JCM 6124 / NCDO 523 / NBRC 100496 / NCIMB 8023 / NCTC 12954 / NRRL B-1118 / 37Y), this protein is D-alanine--D-alanine ligase.